Consider the following 305-residue polypeptide: Homeobox protein NANOGP8 (305 aa).

Residues 1-96 (MSVDPACPQS…KEDKVPVKKQ (96 aa)) form a disordered region. Residues 65 to 82 (SPDSSTSPKGKQPTSAEN) show a composition bias toward polar residues. Positions 95-154 (KQKTRTVFSSTQLCVLNDRFQRQKYLSLQQMQELSNILNLSYKQVKTWFQNQRMKSKRWQ) form a DNA-binding region, homeobox. Repeat copies occupy residues 196-200 (WSNQT), 201-205 (WNNST), 206-210 (WSNQT), 216-220 (WSNHS), 221-225 (WNTQT), 226-230 (WCTQS), 231-235 (WNNQA), and 236-240 (WNSPF). The interval 196-240 (WSNQTWNNSTWSNQTQNIQSWSNHSWNTQTWCTQSWNNQAWNSPF) is 8 X repeats starting with a Trp in each unit. Residues 196–240 (WSNQTWNNSTWSNQTQNIQSWSNHSWNTQTWCTQSWNNQAWNSPF) are sufficient for transactivation activity. The tract at residues 241–305 (YNCGEESLQS…YSMNMQPEDV (65 aa)) is sufficient for strong transactivation activity.

The protein belongs to the Nanog homeobox family.

It localises to the nucleus. Functionally, may act as a transcription regulator. When overexpressed, promotes entry of cells into S phase and cell proliferation. This Homo sapiens (Human) protein is Homeobox protein NANOGP8 (NANOGP8).